Reading from the N-terminus, the 337-residue chain is Protein XAP5 CIRCADIAN TIMEKEEPER (337 aa).

Ser2 is subject to N-acetylserine. 2 coiled-coil regions span residues 13–41 (QDAVRIRRLQKQREAERKKIQELKSKSAS) and 72–121 (TREE…GSSR). Residues 23 to 37 (KQREAERKKIQELKS) are compositionally biased toward basic and acidic residues. The tract at residues 23–47 (KQREAERKKIQELKSKSASGNDQSG) is disordered. The segment covering 38–47 (KSASGNDQSG) has biased composition (polar residues). A disordered region spans residues 125 to 174 (AEDFENGSDEDDGENKSSGTGNLRCGKLGKDPSVETNFLPDSEREAEEQA). A compositionally biased stretch (acidic residues) spans 126–137 (EDFENGSDEDDG). Ser132 is subject to Phosphoserine. Positions 165–174 (DSEREAEEQA) are enriched in basic and acidic residues.

This sequence belongs to the FAM50 family. As to expression, expressed in leaves stems, flowers, roots, trichomes and hypocotyls.

It localises to the nucleus. Its function is as follows. Involved in light regulation of the circadian clock and photomorphogenesis. May play a global role in coordinating growth in response to the light environment. Acts as a light quality sensor directing both negative and positive transcriptional regulation. Inhibits growth in red light but promote growth in blue light. Inhibits clock gene expression in diurnal cycles. Plays no role in the control of flowering time. The polypeptide is Protein XAP5 CIRCADIAN TIMEKEEPER (XCT) (Arabidopsis thaliana (Mouse-ear cress)).